We begin with the raw amino-acid sequence, 465 residues long: Asparagine--tRNA ligase (465 aa).

This sequence belongs to the class-II aminoacyl-tRNA synthetase family. As to quaternary structure, homodimer.

It is found in the cytoplasm. It catalyses the reaction tRNA(Asn) + L-asparagine + ATP = L-asparaginyl-tRNA(Asn) + AMP + diphosphate + H(+). The polypeptide is Asparagine--tRNA ligase (Hahella chejuensis (strain KCTC 2396)).